The primary structure comprises 115 residues: Large ribosomal subunit protein bL19 (115 aa).

The protein belongs to the bacterial ribosomal protein bL19 family.

This protein is located at the 30S-50S ribosomal subunit interface and may play a role in the structure and function of the aminoacyl-tRNA binding site. The protein is Large ribosomal subunit protein bL19 of Streptococcus thermophilus (strain CNRZ 1066).